Consider the following 462-residue polypeptide: Polygalacturonase (462 aa).

The N-terminal stretch at 1-22 (MALTRLLLPISILWFCFYSSHT) is a signal peptide. An N-linked (GlcNAc...) asparagine glycan is attached at asparagine 173. Aspartate 278 serves as the catalytic Proton donor. A disulfide bridge links cysteine 280 with cysteine 297. Asparagine 294 carries N-linked (GlcNAc...) asparagine glycosylation. The active site involves histidine 301. N-linked (GlcNAc...) asparagine glycosylation is present at asparagine 358. Cystine bridges form between cysteine 407–cysteine 413 and cysteine 435–cysteine 460.

It belongs to the glycosyl hydrolase 28 family.

The protein resides in the secreted. It is found in the cell wall. It carries out the reaction (1,4-alpha-D-galacturonosyl)n+m + H2O = (1,4-alpha-D-galacturonosyl)n + (1,4-alpha-D-galacturonosyl)m.. In terms of biological role, acts in concert with the pectinesterase, in the ripening process. Is involved in cell wall metabolism, specifically in polyuronide degradation. This Persea americana (Avocado) protein is Polygalacturonase.